The sequence spans 322 residues: Helix-loop-helix 34 (322 aa).

A compositionally biased stretch (basic and acidic residues) spans 1-11 (METNLSEEKQK). The disordered stretch occupies residues 1 to 23 (METNLSEEKQKPSKSQAQQRRQM). A bHLH domain is found at 8–62 (EKQKPSKSQAQQRRQMENYEFSQLANELPLARAISGQHIDKTTMVRLATAYIKLH). 2 PAS domains span residues 82-152 (DSLW…DLNW) and 203-276 (PTPV…FNLG).

As to quaternary structure, efficient DNA binding requires dimerization with another bHLH protein. Expressed in a small subset of neurons, probably AVJL and AVJR. Expressed in the AVH neurons.

It is found in the nucleus. Transcription factor. Involved in specifying AVH neuron identity, acting in concert with unc-42. Involved in serotonin-mediated feeding behavior, probably acting by modulating expression of genes involved in glutamate signaling. In Caenorhabditis elegans, this protein is Helix-loop-helix 34 (hlh-34).